The primary structure comprises 291 residues: 3-hydroxy-5-phosphonooxypentane-2,4-dione thiolase (291 aa).

Lysine 203 acts as the Schiff-base intermediate with substrate in catalysis.

The protein belongs to the DeoC/FbaB aldolase family. In terms of assembly, homodecamer.

It localises to the cytoplasm. It catalyses the reaction dihydroxyacetone phosphate + acetyl-CoA = 3-hydroxy-2,4-dioxopentyl phosphate + CoA. Functionally, involved in the degradation of phospho-AI-2, thereby terminating induction of the lsr operon and closing the AI-2 signaling cycle. Catalyzes the transfer of an acetyl moiety from 3-hydroxy-5-phosphonooxypentane-2,4-dione to CoA to form glycerone phosphate and acetyl-CoA. The protein is 3-hydroxy-5-phosphonooxypentane-2,4-dione thiolase of Salmonella typhimurium (strain LT2 / SGSC1412 / ATCC 700720).